Consider the following 477-residue polypeptide: Probable cytosolic Fe-S cluster assembly factor GK14772 (477 aa).

[4Fe-4S] cluster-binding residues include C23, C69, C72, C75, C188, C244, C396, and C400.

Belongs to the NARF family.

Its function is as follows. Component of the cytosolic iron-sulfur (Fe/S) protein assembly machinery. Required for maturation of extramitochondrial Fe/S proteins. In Drosophila willistoni (Fruit fly), this protein is Probable cytosolic Fe-S cluster assembly factor GK14772.